Consider the following 1843-residue polypeptide: Proteasome activator complex subunit 4 (1843 aa).

The segment covering Met-1–Glu-11 has biased composition (low complexity). Residues Met-1–Gly-25 are disordered. Positions Pro-12–Gly-22 are enriched in pro residues. HEAT repeat units follow at residues Pro-475 to Cys-519 and Asn-998 to Gly-1037. Phosphoserine is present on Ser-1121. HEAT repeat units follow at residues Arg-1179 to Arg-1217 and Asp-1354 to His-1392. A Phosphoserine modification is found at Ser-1614. HEAT repeat units follow at residues Pro-1636–Phe-1674 and Glu-1680–Leu-1718. The interval Ala-1650–Lys-1738 is bromodomain-like (BRDL). Ser-1746 is modified (phosphoserine).

The protein belongs to the BLM10 family. In terms of assembly, homodimer. Interacts with the 20S and 26S proteasomes. Component of the spermatoproteasome, a form of the proteasome specifically found in testis.

It localises to the cytoplasm. The protein localises to the cytosol. The protein resides in the nucleus. It is found in the nucleus speckle. In terms of biological role, associated component of the proteasome that specifically recognizes acetylated histones and promotes ATP- and ubiquitin-independent degradation of core histones during spermatogenesis and DNA damage response. Recognizes and binds acetylated histones via its bromodomain-like (BRDL) region and activates the proteasome by opening the gated channel for substrate entry. Binds to the core proteasome via its C-terminus, which occupies the same binding sites as the proteasomal ATPases, opening the closed structure of the proteasome via an active gating mechanism. Component of the spermatoproteasome, a form of the proteasome specifically found in testis: binds to acetylated histones and promotes degradation of histones, thereby participating actively to the exchange of histones during spermatogenesis. Also involved in DNA damage response in somatic cells, by promoting degradation of histones following DNA double-strand breaks. This Homo sapiens (Human) protein is Proteasome activator complex subunit 4.